A 156-amino-acid chain; its full sequence is Arginine repressor (156 aa).

The protein belongs to the ArgR family.

Its subcellular location is the cytoplasm. Its pathway is amino-acid biosynthesis; L-arginine biosynthesis [regulation]. Functionally, regulates arginine biosynthesis genes. The protein is Arginine repressor of Vibrio campbellii (strain ATCC BAA-1116).